We begin with the raw amino-acid sequence, 183 residues long: Casparian strip membrane protein 2 (183 aa).

The Cytoplasmic portion of the chain corresponds to methionine 1–serine 23. Residues isoleucine 24 to methionine 44 form a helical membrane-spanning segment. Residues glycine 45–threonine 71 are Extracellular-facing. The N-linked (GlcNAc...) asparagine glycan is linked to asparagine 48. The chain crosses the membrane as a helical span at residues phenylalanine 72 to isoleucine 92. Residues alanine 93–arginine 104 lie on the Cytoplasmic side of the membrane. A helical membrane pass occupies residues leucine 105–alanine 125. Residues threonine 126–serine 158 lie on the Extracellular side of the membrane. A helical transmembrane segment spans residues leucine 159–alanine 179. At leucine 180–arginine 183 the chain is on the cytoplasmic side.

The protein belongs to the Casparian strip membrane proteins (CASP) family. As to quaternary structure, homodimer and heterodimers.

Its subcellular location is the cell membrane. Functionally, regulates membrane-cell wall junctions and localized cell wall deposition. Required for establishment of the Casparian strip membrane domain (CSD) and the subsequent formation of Casparian strips, a cell wall modification of the root endodermis that determines an apoplastic barrier between the intraorganismal apoplasm and the extraorganismal apoplasm and prevents lateral diffusion. The polypeptide is Casparian strip membrane protein 2 (Triticum aestivum (Wheat)).